Consider the following 205-residue polypeptide: Recombination protein RecR (205 aa).

A C4-type zinc finger spans residues 58 to 75 (CSLCQNVTDKEIDPCNIC). The Toprim domain maps to 83 to 182 (RVVCVVEAPN…KVTRIARGIP (100 aa)).

This sequence belongs to the RecR family.

May play a role in DNA repair. It seems to be involved in an RecBC-independent recombinational process of DNA repair. It may act with RecF and RecO. This is Recombination protein RecR from Chloroherpeton thalassium (strain ATCC 35110 / GB-78).